Here is a 417-residue protein sequence, read N- to C-terminus: MWPRLVANKILRKSLGSNNFVADFPPNTDQKLIEASGLADERSKSILHNQHKTTLLNYKVFVSTWNVGGIVPDDGLDMEDLLETHKTPCDIYVLGFQEVVPLRASNVLGSDNNKVSTKWNSLIRDALNKRARPHRDEDLSESKGINGISQDFRCIISKQMVGILITVWVRGDLWPYIRYPSVSCVGCGIMGCLGNKGSVSVRFQLHETTFCFVCSHLASGGRDRDERQRNSDVNEILARSSFPRGSSLDLPKKILDHDRVIFLGDLNYRISLPEEKTRLLVESKKWNILLENDQLRMEIMNGQIFRGWQEGIVKFAPTYKYVPNSDLYYGCITYKKDEKKRAPAWCDRIIWYGNGLKQHEYTRGETKISDHRPVKAIFTTEITVTRRGKKIRNFFFSDRFEERIGDIDSKDYSWIST.

Catalytic regions lie at residues 258–273 (DRVI…ISLP) and 339–354 (KKRA…WYGN).

The protein belongs to the inositol polyphosphate 5-phosphatase family. Specifically expressed in roots.

It catalyses the reaction a 1,2-diacyl-sn-glycero-3-phospho-(1D-myo-inositol-4,5-bisphosphate) + H2O = a 1,2-diacyl-sn-glycero-3-phospho-(1D-myo-inositol 4-phosphate) + phosphate. The enzyme catalyses a 1,2-diacyl-sn-glycero-3-phospho-(1D-myo-inositol-3,4,5-trisphosphate) + H2O = a 1,2-diacyl-sn-glycero-3-phospho-(1D-myo-inositol-3,4-bisphosphate) + phosphate. In terms of biological role, has phosphatase activity toward PtdIns(4,5)P2 and at a lower extent toward PtdIns(3,4,5)P3 but not toward Ins(1,4,5)P3. Functions in salt stress response by regulating reactive oxygen species (ROS) production, endocytosis, Ca(2+) influx and stress-responsive genes expression. This chain is Type IV inositol polyphosphate 5-phosphatase 9, found in Arabidopsis thaliana (Mouse-ear cress).